The primary structure comprises 670 residues: Nitrate import ATP-binding protein NrtC (670 aa).

Residues 5–239 (IEIDHVDRIF…RPRHRLEVVN (235 aa)) form the ABC transporter domain. 42–49 (GHSGCGKS) provides a ligand contact to ATP. Positions 255–278 (NQQKRAKKVGAVSQFAEAMGGNGL) are linker. Positions 279 to 670 (EKINLDLGFI…LIDQIDQVNQ (392 aa)) are nrtA-like.

Belongs to the ABC transporter superfamily. Nitrate/nitrite/cyanate uptake transporter (NitT) (TC 3.A.1.16) family. In terms of assembly, the complex is composed of two ATP-binding proteins (NrtC and NrtD), two transmembrane proteins (NrtB) and a solute-binding protein (NrtA).

The protein resides in the cell inner membrane. It catalyses the reaction nitrate(out) + ATP + H2O = nitrate(in) + ADP + phosphate + H(+). Functionally, part of the ABC transporter complex NrtABCD involved in nitrate uptake. The complex is probably also involved in nitrite transport. Probably responsible for energy coupling to the transport system. This is Nitrate import ATP-binding protein NrtC (nrtC) from Synechocystis sp. (strain ATCC 27184 / PCC 6803 / Kazusa).